A 212-amino-acid chain; its full sequence is Thymidylate kinase (212 aa).

11 to 18 contributes to the ATP binding site; the sequence is GPEGAGKT.

Belongs to the thymidylate kinase family.

The catalysed reaction is dTMP + ATP = dTDP + ADP. In terms of biological role, phosphorylation of dTMP to form dTDP in both de novo and salvage pathways of dTTP synthesis. The chain is Thymidylate kinase from Streptococcus pneumoniae (strain ATCC 700669 / Spain 23F-1).